We begin with the raw amino-acid sequence, 88 residues long: Small ribosomal subunit protein uS15 (88 aa).

It belongs to the universal ribosomal protein uS15 family. Part of the 30S ribosomal subunit. Forms a bridge to the 50S subunit in the 70S ribosome, contacting the 23S rRNA.

In terms of biological role, one of the primary rRNA binding proteins, it binds directly to 16S rRNA where it helps nucleate assembly of the platform of the 30S subunit by binding and bridging several RNA helices of the 16S rRNA. Functionally, forms an intersubunit bridge (bridge B4) with the 23S rRNA of the 50S subunit in the ribosome. The polypeptide is Small ribosomal subunit protein uS15 (Opitutus terrae (strain DSM 11246 / JCM 15787 / PB90-1)).